The chain runs to 121 residues: uncharacterized protein (121 aa).

An HIT domain is found at 7 to 121 (IFCKIVRGEV…GGREMSWPPG (115 aa)). The Histidine triad motif signature appears at 105 to 109 (HLHLH).

This is an uncharacterized protein from Aquifex aeolicus (strain VF5).